A 553-amino-acid polypeptide reads, in one-letter code: Undecaprenyl phosphate-alpha-4-amino-4-deoxy-L-arabinose arabinosyl transferase 2 (553 aa).

12 helical membrane-spanning segments follow: residues 6 to 26, 85 to 105, 115 to 135, 137 to 157, 178 to 198, 208 to 228, 261 to 281, 295 to 315, 317 to 337, 352 to 372, 386 to 406, and 410 to 430; these read ASKI…LFPL, FAVR…IYLL, VAFV…VGTY, VLDP…FWAL, MAFM…MIPV, MLLY…PWVL, FWYY…LLPG, ELFF…IAKG, LPTY…KYGV, GYIN…IQLV, WVLA…CSTL, and HWLW…QAIP.

This sequence belongs to the glycosyltransferase 83 family.

It localises to the cell inner membrane. The catalysed reaction is 4-amino-4-deoxy-alpha-L-arabinopyranosyl di-trans,octa-cis-undecaprenyl phosphate + lipid IVA = lipid IIA + di-trans,octa-cis-undecaprenyl phosphate.. It participates in lipopolysaccharide metabolism; 4-amino-4-deoxy-beta-L-arabinose-lipid A biosynthesis. Catalyzes the transfer of the L-Ara4N moiety of the glycolipid undecaprenyl phosphate-alpha-L-Ara4N to lipid A. The modified arabinose is attached to lipid A and is required for resistance to polymyxin and cationic antimicrobial peptides. This chain is Undecaprenyl phosphate-alpha-4-amino-4-deoxy-L-arabinose arabinosyl transferase 2, found in Proteus mirabilis (strain HI4320).